Consider the following 139-residue polypeptide: Large ribosomal subunit protein uL16c (139 aa).

The span at 1–17 shows a compositional bias: basic residues; sequence MLSPKKTKFRKQHRGRM. The interval 1-23 is disordered; sequence MLSPKKTKFRKQHRGRMKGSASK.

It belongs to the universal ribosomal protein uL16 family. In terms of assembly, part of the 50S ribosomal subunit.

It localises to the plastid. The protein localises to the chloroplast. This Pyropia yezoensis (Susabi-nori) protein is Large ribosomal subunit protein uL16c.